The primary structure comprises 356 residues: Phosphoribosylformylglycinamidine cyclo-ligase (356 aa).

Belongs to the AIR synthase family.

Its subcellular location is the cytoplasm. The catalysed reaction is 2-formamido-N(1)-(5-O-phospho-beta-D-ribosyl)acetamidine + ATP = 5-amino-1-(5-phospho-beta-D-ribosyl)imidazole + ADP + phosphate + H(+). It participates in purine metabolism; IMP biosynthesis via de novo pathway; 5-amino-1-(5-phospho-D-ribosyl)imidazole from N(2)-formyl-N(1)-(5-phospho-D-ribosyl)glycinamide: step 2/2. In Sinorhizobium fredii (strain NBRC 101917 / NGR234), this protein is Phosphoribosylformylglycinamidine cyclo-ligase.